Consider the following 467-residue polypeptide: Probable citrate synthase 2, mitochondrial (467 aa).

Active-site residues include H303, H349, and D404.

Belongs to the citrate synthase family. Homodimer.

It is found in the mitochondrion matrix. It catalyses the reaction oxaloacetate + acetyl-CoA + H2O = citrate + CoA + H(+). The protein operates within carbohydrate metabolism; tricarboxylic acid cycle; isocitrate from oxaloacetate: step 1/2. The polypeptide is Probable citrate synthase 2, mitochondrial (Aedes aegypti (Yellowfever mosquito)).